A 174-amino-acid chain; its full sequence is FMN-dependent NADPH-azoreductase (174 aa).

Residues 9–11, 15–16, 73–76, and glycine 106 each bind FMN; these read TPR, RT, and EYHS.

The protein belongs to the azoreductase type 2 family. Homotetramer. It depends on FMN as a cofactor.

Catalyzes the reductive cleavage of azo bond in aromatic azo compounds to the corresponding amines. Requires NADPH, but not NADH, as an electron donor for its activity. In Bacillus subtilis (strain 168), this protein is FMN-dependent NADPH-azoreductase (azr).